Reading from the N-terminus, the 1076-residue chain is Bifunctional glutamine synthetase adenylyltransferase/adenylyl-removing enzyme (1076 aa).

Residues 1-521 form an adenylyl removase region; sequence MESSMFKPSS…LHLDIYYRPM (521 aa). Residues 524–1076 form an adenylyl transferase region; sequence VNAQMENDQI…LERNRRRAQR (553 aa). A compositionally biased stretch (low complexity) spans 1041 to 1056; it reads ATATASAATPQPQTAP. Residues 1041–1076 form a disordered region; sequence ATATASAATPQPQTAPRPRMHVIAPRLERNRRRAQR.

This sequence belongs to the GlnE family. Mg(2+) is required as a cofactor.

The catalysed reaction is [glutamine synthetase]-O(4)-(5'-adenylyl)-L-tyrosine + phosphate = [glutamine synthetase]-L-tyrosine + ADP. The enzyme catalyses [glutamine synthetase]-L-tyrosine + ATP = [glutamine synthetase]-O(4)-(5'-adenylyl)-L-tyrosine + diphosphate. Involved in the regulation of glutamine synthetase GlnA, a key enzyme in the process to assimilate ammonia. When cellular nitrogen levels are high, the C-terminal adenylyl transferase (AT) inactivates GlnA by covalent transfer of an adenylyl group from ATP to specific tyrosine residue of GlnA, thus reducing its activity. Conversely, when nitrogen levels are low, the N-terminal adenylyl removase (AR) activates GlnA by removing the adenylyl group by phosphorolysis, increasing its activity. The regulatory region of GlnE binds the signal transduction protein PII (GlnB) which indicates the nitrogen status of the cell. The protein is Bifunctional glutamine synthetase adenylyltransferase/adenylyl-removing enzyme of Bifidobacterium longum subsp. infantis (strain ATCC 15697 / DSM 20088 / JCM 1222 / NCTC 11817 / S12).